The following is a 170-amino-acid chain: Phosphopantetheine adenylyltransferase (170 aa).

S14 provides a ligand contact to substrate. ATP-binding positions include 14–15 (SF) and H22. 3 residues coordinate substrate: K46, L79, and R93. Residues 94 to 96 (GIR), E104, and 129 to 135 (IAEVSST) each bind ATP.

This sequence belongs to the bacterial CoaD family. Homohexamer. Mg(2+) serves as cofactor.

The protein localises to the cytoplasm. The catalysed reaction is (R)-4'-phosphopantetheine + ATP + H(+) = 3'-dephospho-CoA + diphosphate. The protein operates within cofactor biosynthesis; coenzyme A biosynthesis; CoA from (R)-pantothenate: step 4/5. Its function is as follows. Reversibly transfers an adenylyl group from ATP to 4'-phosphopantetheine, yielding dephospho-CoA (dPCoA) and pyrophosphate. In Neisseria meningitidis serogroup C (strain 053442), this protein is Phosphopantetheine adenylyltransferase.